The primary structure comprises 225 residues: Cytidylate kinase (225 aa).

11–19 is an ATP binding site; sequence GPAAAGKST.

This sequence belongs to the cytidylate kinase family. Type 1 subfamily.

The protein resides in the cytoplasm. The catalysed reaction is CMP + ATP = CDP + ADP. It catalyses the reaction dCMP + ATP = dCDP + ADP. The protein is Cytidylate kinase of Bacillus cereus (strain ATCC 10987 / NRS 248).